Consider the following 470-residue polypeptide: L-fuculokinase (470 aa).

It belongs to the FGGY kinase family. It depends on a divalent metal cation as a cofactor.

It carries out the reaction L-fuculose + ATP = L-fuculose 1-phosphate + ADP + H(+). The protein operates within carbohydrate degradation; L-fucose degradation; L-lactaldehyde and glycerone phosphate from L-fucose: step 2/3. Catalyzes the phosphorylation of L-fuculose. The chain is L-fuculokinase from Haemophilus influenzae (strain ATCC 51907 / DSM 11121 / KW20 / Rd).